A 273-amino-acid chain; its full sequence is NAD-dependent protein deacylase (273 aa).

The Deacetylase sirtuin-type domain occupies 20–272 (RERLRQRIFF…PEFVEKLLKG (253 aa)). NAD(+) is bound at residue 48–67 (GAGISAESGIRTFRAADGLW). The substrate site is built by tyrosine 92 and arginine 95. 129-132 (QNID) is a binding site for NAD(+). Residue histidine 147 is the Proton acceptor of the active site. Residues cysteine 155 and cysteine 174 each coordinate Zn(2+). Residues 214–216 (GTS), 240–242 (NLE), and alanine 258 each bind NAD(+).

Belongs to the sirtuin family. Class III subfamily. Zn(2+) is required as a cofactor.

Its subcellular location is the cytoplasm. The enzyme catalyses N(6)-acetyl-L-lysyl-[protein] + NAD(+) + H2O = 2''-O-acetyl-ADP-D-ribose + nicotinamide + L-lysyl-[protein]. It catalyses the reaction N(6)-succinyl-L-lysyl-[protein] + NAD(+) + H2O = 2''-O-succinyl-ADP-D-ribose + nicotinamide + L-lysyl-[protein]. It carries out the reaction N(6)-(2-hydroxyisobutanoyl)-L-lysyl-[protein] + NAD(+) + H2O = 2''-O-(2-hydroxyisobutanoyl)-ADP-D-ribose + nicotinamide + L-lysyl-[protein]. NAD-dependent lysine deacetylase that specifically removes acetyl groups on target proteins. Also acts as a protein-lysine deacylase by mediating protein desuccinylation and de-2-hydroxyisobutyrylation. Modulates the activities of several proteins which are inactive in their acylated form. This Escherichia coli O6:H1 (strain CFT073 / ATCC 700928 / UPEC) protein is NAD-dependent protein deacylase.